Here is a 972-residue protein sequence, read N- to C-terminus: Peptidyl-glycine alpha-amidating monooxygenase (972 aa).

Residues Met-1–Gly-20 form the signal peptide. The interval Met-1–Gly-494 is peptidylglycine alpha-hydroxylating monooxygenase. A propeptide spanning residues Phe-21–Arg-30 is cleaved from the precursor. Topologically, residues Phe-31–Leu-873 are intragranular. 5 disulfides stabilise this stretch: Cys-42/Cys-181, Cys-76/Cys-121, Cys-109/Cys-126, Cys-222/Cys-329, and Cys-288/Cys-310. Cu(2+)-binding residues include His-102 and His-103. 4 residues coordinate Cu(2+): His-167, His-237, His-239, and Met-309. The peptidyl-alpha-hydroxyglycine alpha-amidating lyase stretch occupies residues Asp-495 to Val-817. NHL repeat units follow at residues Val-498–Asp-541, Ala-567–Lys-608, Leu-617–Ser-662, and Gly-670–Asp-714. Residue Val-517 participates in Ca(2+) binding. Arg-530 lines the a protein pocket. His-582 lines the Zn(2+) pocket. Residue Leu-584 coordinates Ca(2+). An intrachain disulfide couples Cys-631 to Cys-652. Tyr-651 provides a ligand contact to a protein. His-687 lines the Zn(2+) pocket. An intrachain disulfide couples Cys-699 to Cys-710. A protein is bound at residue Arg-703. Asn-762 carries N-linked (GlcNAc...) asparagine glycosylation. An NHL 5 repeat occupies Gly-766–Thr-809. His-783 lines the Zn(2+) pocket. Residue Asp-784 coordinates Ca(2+). Residues Val-874–Asp-897 form a helical membrane-spanning segment. Residues Ser-898–Ser-972 lie on the Cytoplasmic side of the membrane. The segment at Asn-925–Ser-942 is interaction with RASSF9. Ser-929 and Ser-942 each carry phosphoserine. The segment at Gly-937–Ser-972 is disordered. Thr-943 is modified (phosphothreonine). At Ser-946 the chain carries Phosphoserine; by UHMK1. The segment covering Glu-949–Tyr-961 has biased composition (acidic residues). Ser-957 is modified (phosphoserine). Positions Ala-963–Ser-972 are enriched in pro residues.

The protein in the C-terminal section; belongs to the peptidyl-alpha-hydroxyglycine alpha-amidating lyase family. This sequence in the N-terminal section; belongs to the copper type II ascorbate-dependent monooxygenase family. In terms of assembly, monomer. Interacts with RASSF9. Requires Zn(2+) as cofactor. The cofactor is Cu(2+).

Its subcellular location is the cytoplasmic vesicle. It is found in the secretory vesicle membrane. It catalyses the reaction a [peptide]-C-terminal glycine + 2 L-ascorbate + O2 = a [peptide]-C-terminal (2S)-2-hydroxyglycine + 2 monodehydro-L-ascorbate radical + H2O. The enzyme catalyses a [peptide]-C-terminal (2S)-2-hydroxyglycine = a [peptide]-C-terminal amide + glyoxylate. The catalysed reaction is N-dodecanoylglycine + 2 L-ascorbate + O2 = N-dodecanoyl-(2S)-hydroxyglycine + 2 monodehydro-L-ascorbate radical + H2O. It carries out the reaction N-dodecanoyl-(2S)-hydroxyglycine = dodecanamide + glyoxylate. It catalyses the reaction N-(9Z,12Z,15Z)-octadecatrienoylglycine + 2 L-ascorbate + O2 = N-(9Z,12Z,15Z)-octadecatrienoyl-(2S)-hydroxyglycine + 2 monodehydro-L-ascorbate radical + H2O. The enzyme catalyses N-(9Z,12Z,15Z)-octadecatrienoyl-(2S)-hydroxyglycine = (9Z,12Z,15Z)-octadecatrienamide + glyoxylate. The catalysed reaction is N-(9Z-octadecenoyl)glycine + 2 L-ascorbate + O2 = N-(9Z-octadecenoyl)-(2S)-hydroxyglycine + 2 monodehydro-L-ascorbate radical + H2O. It carries out the reaction N-(9Z-octadecenoyl)-(2S)-hydroxyglycine = (9Z)-octadecenamide + glyoxylate. It catalyses the reaction N-tetradecanoylglycine + 2 L-ascorbate + O2 = N-tetradecanoyl-(2S)-hydroxyglycine + 2 monodehydro-L-ascorbate radical + H2O. The enzyme catalyses N-tetradecanoyl-(2S)-hydroxyglycine = tetradecamide + glyoxylate. The catalysed reaction is N-decanoylglycine + 2 L-ascorbate + O2 = N-decanoyl-(2S)-hydroxyglycine + 2 monodehydro-L-ascorbate radical + H2O. It carries out the reaction N-decanoyl-(2S)-hydroxyglycine = decanamide + glyoxylate. It catalyses the reaction N-octanoylglycine + 2 L-ascorbate + O2 = N-octanoyl-(2S)-hydroxyglycine + 2 monodehydro-L-ascorbate radical + H2O. The enzyme catalyses N-octanoyl-(2S)-hydroxyglycine = octanamide + glyoxylate. Its activity is regulated as follows. PAM activity is inhibited by EDTA, phenylglyoxal and diethyl pyrocarbonate. PAL activity is stimulated by cadmium and inhibited by mercury. Functionally, bifunctional enzyme that catalyzes amidation of the C-terminus of proteins. Alpha-amidation is present at the C-terminus of many endocrine hormones and neuropeptides and is required for their activity. C-terminal amidation also takes place in response to protein fragmentation triggered by oxidative stress, promoting degradation of amidated protein fragments by the proteasome. Alpha-amidation involves two sequential reactions, both of which are catalyzed by separate catalytic domains of the enzyme. The first step, catalyzed by peptidyl alpha-hydroxylating monooxygenase (PHM) domain, is the copper-, ascorbate-, and O2- dependent stereospecific hydroxylation (with S stereochemistry) at the alpha-carbon (C-alpha) of the C-terminal glycine of the peptidylglycine substrate. The second step, catalyzed by the peptidylglycine amidoglycolate lyase (PAL) domain, is the zinc-dependent cleavage of the N-C-alpha bond, producing the alpha-amidated peptide and glyoxylate. Similarly, catalyzes the two-step conversion of an N-fatty acylglycine to a primary fatty acid amide and glyoxylate. This chain is Peptidyl-glycine alpha-amidating monooxygenase (PAM), found in Bos taurus (Bovine).